The chain runs to 584 residues: Arginine--tRNA ligase (584 aa).

The 'HIGH' region signature appears at 126–136; sequence PNIAKEMHVGH.

Belongs to the class-I aminoacyl-tRNA synthetase family. As to quaternary structure, monomer.

The protein resides in the cytoplasm. The enzyme catalyses tRNA(Arg) + L-arginine + ATP = L-arginyl-tRNA(Arg) + AMP + diphosphate. The chain is Arginine--tRNA ligase from Nostoc punctiforme (strain ATCC 29133 / PCC 73102).